Reading from the N-terminus, the 82-residue chain is ATP synthase subunit c, chloroplastic (82 aa).

The next 2 membrane-spanning stretches (helical) occupy residues 3–23 and 57–77; these read PLIAAASVVAAGLSVGLAAIG and FAFMESLTIYGLVVALALLFA.

Belongs to the ATPase C chain family. As to quaternary structure, F-type ATPases have 2 components, F(1) - the catalytic core - and F(0) - the membrane proton channel. F(1) has five subunits: alpha(3), beta(3), gamma(1), delta(1), epsilon(1). F(0) has four main subunits: a(1), b(1), b'(1) and c(10-14). The alpha and beta chains form an alternating ring which encloses part of the gamma chain. F(1) is attached to F(0) by a central stalk formed by the gamma and epsilon chains, while a peripheral stalk is formed by the delta, b and b' chains.

Its subcellular location is the plastid. It localises to the chloroplast thylakoid membrane. In terms of biological role, f(1)F(0) ATP synthase produces ATP from ADP in the presence of a proton or sodium gradient. F-type ATPases consist of two structural domains, F(1) containing the extramembraneous catalytic core and F(0) containing the membrane proton channel, linked together by a central stalk and a peripheral stalk. During catalysis, ATP synthesis in the catalytic domain of F(1) is coupled via a rotary mechanism of the central stalk subunits to proton translocation. Its function is as follows. Key component of the F(0) channel; it plays a direct role in translocation across the membrane. A homomeric c-ring of between 10-14 subunits forms the central stalk rotor element with the F(1) delta and epsilon subunits. In Oltmannsiellopsis viridis (Marine flagellate), this protein is ATP synthase subunit c, chloroplastic.